Here is a 113-residue protein sequence, read N- to C-terminus: Iron-sulfur cluster insertion protein ErpA (113 aa).

Cysteine 41, cysteine 105, and cysteine 107 together coordinate iron-sulfur cluster.

This sequence belongs to the HesB/IscA family. In terms of assembly, homodimer. Iron-sulfur cluster is required as a cofactor.

Required for insertion of 4Fe-4S clusters for at least IspG. In Actinobacillus succinogenes (strain ATCC 55618 / DSM 22257 / CCUG 43843 / 130Z), this protein is Iron-sulfur cluster insertion protein ErpA.